We begin with the raw amino-acid sequence, 191 residues long: Protein Ves (191 aa).

This sequence belongs to the Ves family.

In Shigella flexneri, this protein is Protein Ves.